Here is a 99-residue protein sequence, read N- to C-terminus: Protein Frey (99 aa).

A helical transmembrane segment spans residues 10–29 (YPRAGLSLFLFYLILAGALL). Residues 60-90 (DYGLRPKHPRPGGPRPLLSQAQQRKRDGPNM) are disordered.

Interacts with SPPL2C (via active sites); the interaction stabilizes FREY1 protein and inhibits SPPL2C proteolytic activity. Interacts with IZUMO1; the interaction retains IZUMO1 at the endoplasmic reticulum membrane and coordinates IZUMO1 complex assembly. Expressed in round spermatids (at protein level).

It localises to the endoplasmic reticulum membrane. Key regulator for male fertility expressed transiently in round spermatids where it recruits IZUMO1 at the endoplasmic reticulum (ER) membrane and coordinates the oolemmal binding multimeric complex (IZUMO1 complex) assembly. Upon complete assembly of the IZUMO1 complex, its ER retention is released, facilitating IZUMO1 complex export to the acrosome. Through the interaction with SPPL2C, inhibits its intramembrane protease activity directly accessing the catalytic center of an I-CLiP. The sequence is that of Protein Frey from Mus musculus (Mouse).